The sequence spans 319 residues: Probable secreted beta-glucosidase C2G2.17c (319 aa).

The first 19 residues, 1–19 (MLFNNFLCFAVSAIPLVSA), serve as a signal peptide directing secretion. Residues N36, N39, N45, N48, and N221 are each glycosylated (N-linked (GlcNAc...) asparagine).

This sequence belongs to the SUN family.

The protein resides in the secreted. In terms of biological role, cell surface beta-glucosidase involved in cell wall biogenesis. This Schizosaccharomyces pombe (strain 972 / ATCC 24843) (Fission yeast) protein is Probable secreted beta-glucosidase C2G2.17c.